The chain runs to 554 residues: Glucose-6-phosphate isomerase (554 aa).

The active-site Proton donor is Glu358. Catalysis depends on residues His389 and Lys515. Over residues 527 to 540 (SDGSPQRQSDSSTD) the composition is skewed to polar residues. The interval 527–554 (SDGSPQRQSDSSTDALVRRYRTQRGRTG) is disordered. Positions 544–554 (RRYRTQRGRTG) are enriched in basic residues.

It belongs to the GPI family.

It localises to the cytoplasm. The catalysed reaction is alpha-D-glucose 6-phosphate = beta-D-fructose 6-phosphate. It participates in carbohydrate biosynthesis; gluconeogenesis. The protein operates within carbohydrate degradation; glycolysis; D-glyceraldehyde 3-phosphate and glycerone phosphate from D-glucose: step 2/4. Its function is as follows. Catalyzes the reversible isomerization of glucose-6-phosphate to fructose-6-phosphate. This is Glucose-6-phosphate isomerase from Mycobacterium ulcerans (strain Agy99).